Reading from the N-terminus, the 536-residue chain is GMP synthase [glutamine-hydrolyzing] (536 aa).

The 194-residue stretch at 19–212 (RILILDFGSQ…VHEICDCAGS (194 aa)) folds into the Glutamine amidotransferase type-1 domain. The active-site Nucleophile is the cysteine 96. Residues histidine 186 and glutamate 188 contribute to the active site. A GMPS ATP-PPase domain is found at 213–411 (WTPDNIIDMR…LGLPAKMINR (199 aa)). 240–246 (SGGVDSS) contributes to the ATP binding site.

Homodimer.

The enzyme catalyses XMP + L-glutamine + ATP + H2O = GMP + L-glutamate + AMP + diphosphate + 2 H(+). It participates in purine metabolism; GMP biosynthesis; GMP from XMP (L-Gln route): step 1/1. Functionally, catalyzes the synthesis of GMP from XMP. In Psychrobacter arcticus (strain DSM 17307 / VKM B-2377 / 273-4), this protein is GMP synthase [glutamine-hydrolyzing].